The chain runs to 749 residues: Ribosome-releasing factor 2, mitochondrial (749 aa).

The N-terminal 22 residues, 1-22 (MLLLLCNRSVVPRGIRRILRTA), are a transit peptide targeting the mitochondrion. The tr-type G domain occupies 44–322 (KNIRNIGILA…AVLKYLPAPN (279 aa)). GTP is bound by residues 53–60 (AHIDGGKT), 117–121 (DTPGH), and 171–174 (NKMD).

This sequence belongs to the TRAFAC class translation factor GTPase superfamily. Classic translation factor GTPase family. EF-G/EF-2 subfamily.

The protein localises to the mitochondrion. Its function is as follows. Mitochondrial GTPase that mediates the disassembly of ribosomes from messenger RNA at the termination of mitochondrial protein biosynthesis. Not involved in the GTP-dependent ribosomal translocation step during translation elongation. The sequence is that of Ribosome-releasing factor 2, mitochondrial from Culex quinquefasciatus (Southern house mosquito).